A 95-amino-acid polypeptide reads, in one-letter code: Class I hydrophobin 13 (95 aa).

4 cysteine pairs are disulfide-bonded: Cys-14–Cys-74, Cys-21–Cys-68, Cys-22–Cys-55, and Cys-75–Cys-88. Asn-23 and Asn-77 each carry an N-linked (GlcNAc...) asparagine glycan.

Belongs to the fungal hydrophobin family. As to quaternary structure, self-assembles to form functional amyloid fibrils called rodlets. Self-assembly into fibrillar rodlets occurs spontaneously at hydrophobic:hydrophilic interfaces and the rodlets further associate laterally to form amphipathic monolayers.

The protein resides in the secreted. It is found in the cell wall. Functionally, aerial growth, conidiation, and dispersal of filamentous fungi in the environment rely upon a capability of their secreting small amphipathic proteins called hydrophobins (HPBs) with low sequence identity. Class I can self-assemble into an outermost layer of rodlet bundles on aerial cell surfaces, conferring cellular hydrophobicity that supports fungal growth, development and dispersal; whereas Class II form highly ordered films at water-air interfaces through intermolecular interactions but contribute nothing to the rodlet structure. The polypeptide is Class I hydrophobin 13 (Pleurotus ostreatus (strain PC15) (Oyster mushroom)).